The chain runs to 232 residues: MASVALIGCTGMVGSHILTSLLAHPSVARVDTISRRTPNAASAAQAKLTTFVSDDTSKWASQLSALTPIPSIFFSSFGTTRAAAGGFENQYKIEHGLNVEMARAARDAGTKVYVLVSSSGASKDSSIPYSRMKGEIEEEAKAMGFEHTVILRPGLISGTREESRPLEAAARYIAGFAGKVHSGLKDSWAQDADVIAKAAVNAGLKALEGDVPAGSEKVWVLGGSDIIKLGKE.

A mitochondrion-targeting transit peptide spans 1–36 (MASVALIGCTGMVGSHILTSLLAHPSVARVDTISRR).

The protein belongs to the FMP52 family.

It is found in the mitochondrion outer membrane. The chain is Protein fmp52-1, mitochondrial (fmp521) from Aspergillus terreus (strain NIH 2624 / FGSC A1156).